A 227-amino-acid polypeptide reads, in one-letter code: Cytochrome c oxidase subunit 2 (227 aa).

At 1–14 (MAYPVQLGFQDAAS) the chain is on the mitochondrial intermembrane side. The chain crosses the membrane as a helical span at residues 15–45 (PIMEELLYFHDHTLMIMFLISSLVLYIISLM). Residues 46-59 (LTTELMHTNTMDAQ) are Mitochondrial matrix-facing. A helical membrane pass occupies residues 60–87 (EVETVWTILPAAILILIALPSLRILYMM). Over 88-227 (DEITTPSLTL…HFEEWLLSML (140 aa)) the chain is Mitochondrial intermembrane. Residues histidine 161, cysteine 196, glutamate 198, cysteine 200, histidine 204, and methionine 207 each coordinate Cu cation. Glutamate 198 provides a ligand contact to Mg(2+).

This sequence belongs to the cytochrome c oxidase subunit 2 family. Component of the cytochrome c oxidase (complex IV, CIV), a multisubunit enzyme composed of 14 subunits. The complex is composed of a catalytic core of 3 subunits MT-CO1, MT-CO2 and MT-CO3, encoded in the mitochondrial DNA, and 11 supernumerary subunits COX4I, COX5A, COX5B, COX6A, COX6B, COX6C, COX7A, COX7B, COX7C, COX8 and NDUFA4, which are encoded in the nuclear genome. The complex exists as a monomer or a dimer and forms supercomplexes (SCs) in the inner mitochondrial membrane with NADH-ubiquinone oxidoreductase (complex I, CI) and ubiquinol-cytochrome c oxidoreductase (cytochrome b-c1 complex, complex III, CIII), resulting in different assemblies (supercomplex SCI(1)III(2)IV(1) and megacomplex MCI(2)III(2)IV(2)). Found in a complex with TMEM177, COA6, COX18, COX20, SCO1 and SCO2. Interacts with TMEM177 in a COX20-dependent manner. Interacts with COX20. Interacts with COX16. Requires Cu cation as cofactor.

It localises to the mitochondrion inner membrane. It catalyses the reaction 4 Fe(II)-[cytochrome c] + O2 + 8 H(+)(in) = 4 Fe(III)-[cytochrome c] + 2 H2O + 4 H(+)(out). In terms of biological role, component of the cytochrome c oxidase, the last enzyme in the mitochondrial electron transport chain which drives oxidative phosphorylation. The respiratory chain contains 3 multisubunit complexes succinate dehydrogenase (complex II, CII), ubiquinol-cytochrome c oxidoreductase (cytochrome b-c1 complex, complex III, CIII) and cytochrome c oxidase (complex IV, CIV), that cooperate to transfer electrons derived from NADH and succinate to molecular oxygen, creating an electrochemical gradient over the inner membrane that drives transmembrane transport and the ATP synthase. Cytochrome c oxidase is the component of the respiratory chain that catalyzes the reduction of oxygen to water. Electrons originating from reduced cytochrome c in the intermembrane space (IMS) are transferred via the dinuclear copper A center (CU(A)) of subunit 2 and heme A of subunit 1 to the active site in subunit 1, a binuclear center (BNC) formed by heme A3 and copper B (CU(B)). The BNC reduces molecular oxygen to 2 water molecules using 4 electrons from cytochrome c in the IMS and 4 protons from the mitochondrial matrix. This is Cytochrome c oxidase subunit 2 (MT-CO2) from Lemur catta (Ring-tailed lemur).